A 104-amino-acid chain; its full sequence is Protein E7 (104 aa).

The E7 terminal domain stretch occupies residues 1–47 (MHGDTINIQDVILDLVPQPEIDLQCYEQLDYEQFDSSEEDETDNVRN). Positions 23–27 (LQCYE) match the LXCXE motif; interaction with host RB1 and TMEM173/STING motif. A zinc finger spans residues 65 to 101 (CCVCNSIVQLAVLSSRQNVRAVEQLLMGDVSLVCHQC). The short motif at 83–91 (VRAVEQLLM) is the Nuclear export signal element.

This sequence belongs to the papillomaviridae E7 protein family. Homodimer. Homooligomer. Interacts with host RB1; this interaction induces dissociation of RB1-E2F1 complex thereby disrupting RB1 activity. Interacts with host EP300; this interaction represses EP300 transcriptional activity. Interacts with protein E2; this interaction inhibits E7 oncogenic activity. Interacts with host TMEM173/STING; this interaction impairs the ability of TMEM173/STING to sense cytosolic DNA and promote the production of type I interferon (IFN-alpha and IFN-beta). Post-translationally, highly phosphorylated.

The protein resides in the host cytoplasm. It localises to the host nucleus. In terms of biological role, plays a role in viral genome replication by driving entry of quiescent cells into the cell cycle. Stimulation of progression from G1 to S phase allows the virus to efficiently use the cellular DNA replicating machinery to achieve viral genome replication. E7 protein has both transforming and trans-activating activities. Induces the disassembly of the E2F1 transcription factor from RB1, with subsequent transcriptional activation of E2F1-regulated S-phase genes. Interferes with host histone deacetylation mediated by HDAC1 and HDAC2, leading to transcription activation. Also plays a role in the inhibition of both antiviral and antiproliferative functions of host interferon alpha. Interaction with host TMEM173/STING impairs the ability of TMEM173/STING to sense cytosolic DNA and promote the production of type I interferon (IFN-alpha and IFN-beta). This Homo sapiens (Human) protein is Protein E7.